A 559-amino-acid polypeptide reads, in one-letter code: Cytokine-like nuclear factor N-PAC (559 aa).

A PWWP domain is found at Val-9–Phe-70. The interval Ser-106–Thr-137 is disordered. The segment covering Gln-108–Gly-125 has biased composition (basic and acidic residues). A dehydrogenase domain region spans residues Arg-267–Phe-559. NAD(+) contacts are provided by residues Gly-277–Asn-291 and Lys-511.

This sequence belongs to the HIBADH-related family. NP60 subfamily. Binds to mononucleosomes.

Its subcellular location is the chromosome. Nucleosome-destabilizing factor that is recruited to genes during transcriptional activation and colocalizes with a subset of trimethylated 'Lys-36' histone H3 (H3K36me3)-enriched regions. The protein is Cytokine-like nuclear factor N-PAC of Aedes aegypti (Yellowfever mosquito).